The primary structure comprises 144 residues: Large ribosomal subunit protein uL16 (144 aa).

It belongs to the universal ribosomal protein uL16 family. Part of the 50S ribosomal subunit.

Functionally, binds 23S rRNA and is also seen to make contacts with the A and possibly P site tRNAs. This chain is Large ribosomal subunit protein uL16, found in Caldanaerobacter subterraneus subsp. tengcongensis (strain DSM 15242 / JCM 11007 / NBRC 100824 / MB4) (Thermoanaerobacter tengcongensis).